Here is a 272-residue protein sequence, read N- to C-terminus: Shikimate dehydrogenase (NADP(+)) (272 aa).

Shikimate is bound by residues 14–16 (SKS) and Thr-61. Lys-65 acts as the Proton acceptor in catalysis. Glu-77 is a binding site for NADP(+). Positions 86 and 102 each coordinate shikimate. NADP(+) contacts are provided by residues 126–130 (GAGGA), 149–154 (NRTVSR), and Met-213. Residue Tyr-215 participates in shikimate binding. Gly-237 lines the NADP(+) pocket.

It belongs to the shikimate dehydrogenase family. Homodimer.

The catalysed reaction is shikimate + NADP(+) = 3-dehydroshikimate + NADPH + H(+). It functions in the pathway metabolic intermediate biosynthesis; chorismate biosynthesis; chorismate from D-erythrose 4-phosphate and phosphoenolpyruvate: step 4/7. Its function is as follows. Involved in the biosynthesis of the chorismate, which leads to the biosynthesis of aromatic amino acids. Catalyzes the reversible NADPH linked reduction of 3-dehydroshikimate (DHSA) to yield shikimate (SA). This chain is Shikimate dehydrogenase (NADP(+)), found in Escherichia coli O6:H1 (strain CFT073 / ATCC 700928 / UPEC).